The sequence spans 368 residues: Proline-rich protein 5-like (368 aa).

Residue Ser28 is modified to Phosphoserine. The interval 327 to 368 (PSFPPPHRQCSSEPNITDNPDGLEEGARGSQEGSELNCASLS) is disordered. Composition is skewed to polar residues over residues 335-344 (QCSSEPNITD) and 357-368 (QEGSELNCASLS).

Belongs to the PROTOR family. Interacts with the mammalian target of rapamycin complex 2 (mTORC2) which contains MTOR, MLST8, PRR5, RICTOR, MAPKAP1 and DEPTOR. Interacts with RFFL. Interacts (via C-terminus) with ZFP36 (via C-terminus); this interaction may accelerate ZFP36-mediated mRNA decay during stress. Interacts with RICTOR. Post-translationally, ubiquitinated. Ubiquitination by RFFL promotes proteasomal degradation of PRR5L thereby modifying the substrate-specific activity of the mTORC2 complex. Ubiquitination by RFFL is stimulated by LPA/lysophosphatidic acid.

In terms of biological role, associates with the mTORC2 complex that regulates cellular processes including survival and organization of the cytoskeleton. Regulates the activity of the mTORC2 complex in a substrate-specific manner preventing for instance the specific phosphorylation of PKCs and thereby controlling cell migration. Plays a role in the stimulation of ZFP36-mediated mRNA decay of several ZFP36-associated mRNAs, such as TNF-alpha and GM-CSF, in response to stress. Required for ZFP36 localization to cytoplasmic stress granule (SG) and P-body (PB) in response to stress. This Homo sapiens (Human) protein is Proline-rich protein 5-like (PRR5L).